A 184-amino-acid polypeptide reads, in one-letter code: NADH-quinone oxidoreductase subunit B (184 aa).

[4Fe-4S] cluster is bound by residues cysteine 37, cysteine 38, cysteine 103, and cysteine 132.

It belongs to the complex I 20 kDa subunit family. NDH-1 is composed of 14 different subunits. Subunits NuoB, C, D, E, F, and G constitute the peripheral sector of the complex. [4Fe-4S] cluster serves as cofactor.

Its subcellular location is the cell membrane. It catalyses the reaction a quinone + NADH + 5 H(+)(in) = a quinol + NAD(+) + 4 H(+)(out). Its function is as follows. NDH-1 shuttles electrons from NADH, via FMN and iron-sulfur (Fe-S) centers, to quinones in the respiratory chain. The immediate electron acceptor for the enzyme in this species is believed to be a menaquinone. Couples the redox reaction to proton translocation (for every two electrons transferred, four hydrogen ions are translocated across the cytoplasmic membrane), and thus conserves the redox energy in a proton gradient. This is NADH-quinone oxidoreductase subunit B from Mycolicibacterium gilvum (strain PYR-GCK) (Mycobacterium gilvum (strain PYR-GCK)).